The sequence spans 185 residues: ADP-ribosylation factor-like protein 2 (185 aa).

Glycine 2 is lipidated: N-myristoyl glycine. GTP-binding positions include 23–30, 66–70, and 125–128; these read GLDNSGKT, DVGGQ, and NKQD.

Belongs to the small GTPase superfamily. Arf family. Supercomplex made of cofactors A to E. Cofactors A and D function by capturing and stabilizing tubulin in a quasi-native conformation. Cofactor E binds to the cofactor D-tubulin complex; interaction with cofactor C then causes the release of tubulin polypeptides that are committed to the native state. As to expression, expressed in seedlings, leaves, roots and inflorescences.

It is found in the cytoplasm. Its function is as follows. Has a role in the cofactor-dependent pathway of microtubule biogenesis. Not essential for cell viability. May play a regulatory role in sequestring TFCD. In Arabidopsis thaliana (Mouse-ear cress), this protein is ADP-ribosylation factor-like protein 2 (ARL2).